Reading from the N-terminus, the 366-residue chain is MTRETERFPAREFQRDLLDWFARERRDLPWRKDRDPYKVWVSEVMLQQTRVETVIPYFEQFIDRFPTLEALADADEDEVLKAWEGLGYYSRVRNLHAAVKEVKTRYGGKVPDDPDEFSRLKGVGPYTVGAVLSLAYGVPEPAVDGNVMRVLSRLFLVTDDIAKPSTRKRFEQIVREIMAYENPGAFNEALIELGALVCTPRRPSCLLCPVQAYCQAFAEGVAEELPVKMKKTAVKQVPLAVAVLADDEGRVLIRKRDSTGLLANLWEFPSCETDGADGKEKLEQMVGEQYGLQVELTEPIVSFEHAFSHLVWQLTVFPGRLVHGGPVEEPYRLAPEDELKAYAFPVSHQRVWREYKEWASGVRRPD.

Residue 30 to 31 (WR) participates in DNA binding. Glutamate 43 acts as the Proton donor/acceptor in catalysis. DNA is bound by residues 48–49 (QT), 86–88 (LGY), tyrosine 126, and glutamate 188. The HhH domain maps to 105-133 (RYGGKVPDDPDEFSRLKGVGPYTVGAVLS). Cysteine 198, cysteine 205, cysteine 208, and cysteine 214 together coordinate [4Fe-4S] cluster. A DNA-binding site is contributed by serine 308.

Belongs to the Nth/MutY family. Requires [4Fe-4S] cluster as cofactor.

It catalyses the reaction Hydrolyzes free adenine bases from 7,8-dihydro-8-oxoguanine:adenine mismatched double-stranded DNA, leaving an apurinic site.. In terms of biological role, base excision repair (BER) glycosylase that initiates repair of A:oxoG to C:G by removing the inappropriately paired adenine base from the DNA backbone, generating an abasic site product. 8-oxoguanine (oxoG) is a genotoxic DNA lesion resulting from oxidation of guanine; this residue is misread by replicative DNA polymerases, that insert adenine instead of cytosine opposite the oxidized damaged base. Shows a powerful dicrimination of A versus C, since it does not cleave cytosine in oxoG:C pairs. May also be able to remove adenine from A:G mispairs, although this activity may not be physiologically relevant. In Geobacillus stearothermophilus (Bacillus stearothermophilus), this protein is Adenine DNA glycosylase.